A 419-amino-acid chain; its full sequence is MIFDKVNYKEFDKEVWEAIQAEEKRQQNNIELIASENVVSKAVMAAQGSILTNKYAEGYPGRRYYGGTECVDVVESLAIERAKEIFGAKFANVQPHSGSQANCAAYMALIEPGDTVMGMDLAAGGHLTHGASVSFSGQTYNFVAYNVDEETGLLDYDAILKQAKEVQPKLIVAGASAYARTIDFAKFREIADAVGAKLMVDMAHIAGLVAAGLHPNPVPHAHITTTTTHKTLRGPRGGLILTNDEELIKKINSAIFPGIQGGPLEHVIAAKAVSFKEVLDPAFKDYAQKVIENSKAMAEVFLANPNFKVITGGTDNHLFLVDVTKVVENGKVAQHLLDEVNITLNKNSIPYEKLSPFKTSGIRIGSAAITARGFGVEEARKVAQLTIKALENAENEKALEEVRQEVRALTDQFPLYEGL.

(6S)-5,6,7,8-tetrahydrofolate contacts are provided by residues leucine 121 and 125–127 (GHL). Lysine 230 is modified (N6-(pyridoxal phosphate)lysine). (6S)-5,6,7,8-tetrahydrofolate-binding positions include glutamate 246 and 355 to 357 (SPF).

This sequence belongs to the SHMT family. As to quaternary structure, homodimer. The cofactor is pyridoxal 5'-phosphate.

It localises to the cytoplasm. It carries out the reaction (6R)-5,10-methylene-5,6,7,8-tetrahydrofolate + glycine + H2O = (6S)-5,6,7,8-tetrahydrofolate + L-serine. The protein operates within one-carbon metabolism; tetrahydrofolate interconversion. Its pathway is amino-acid biosynthesis; glycine biosynthesis; glycine from L-serine: step 1/1. Catalyzes the reversible interconversion of serine and glycine with tetrahydrofolate (THF) serving as the one-carbon carrier. This reaction serves as the major source of one-carbon groups required for the biosynthesis of purines, thymidylate, methionine, and other important biomolecules. Also exhibits THF-independent aldolase activity toward beta-hydroxyamino acids, producing glycine and aldehydes, via a retro-aldol mechanism. The protein is Serine hydroxymethyltransferase of Streptococcus suis (strain 98HAH33).